We begin with the raw amino-acid sequence, 105 residues long: Small ribosomal subunit protein uS10 (105 aa).

This sequence belongs to the universal ribosomal protein uS10 family. As to quaternary structure, part of the 30S ribosomal subunit.

In terms of biological role, involved in the binding of tRNA to the ribosomes. The polypeptide is Small ribosomal subunit protein uS10 (Maridesulfovibrio salexigens (strain ATCC 14822 / DSM 2638 / NCIMB 8403 / VKM B-1763) (Desulfovibrio salexigens)).